A 227-amino-acid polypeptide reads, in one-letter code: PKHD-type hydroxylase Neut_0373 (227 aa).

The 102-residue stretch at 78–179 (KIMPPFFNRY…RIACFMFIQS (102 aa)) folds into the Fe2OG dioxygenase domain. Fe cation is bound by residues histidine 97, aspartate 99, and histidine 160. Arginine 170 lines the 2-oxoglutarate pocket.

It depends on Fe(2+) as a cofactor. Requires L-ascorbate as cofactor.

The chain is PKHD-type hydroxylase Neut_0373 from Nitrosomonas eutropha (strain DSM 101675 / C91 / Nm57).